Reading from the N-terminus, the 643-residue chain is Threonine--tRNA ligase (643 aa).

One can recognise a TGS domain in the interval 1-61 (MPIITLPDGS…EQDATLEIIT (61 aa)). Positions 243 to 534 (DHRKIGKALD…ITEEYAGFFP (292 aa)) are catalytic. The Zn(2+) site is built by cysteine 334, histidine 385, and histidine 511.

It belongs to the class-II aminoacyl-tRNA synthetase family. Homodimer. Zn(2+) is required as a cofactor.

It localises to the cytoplasm. It carries out the reaction tRNA(Thr) + L-threonine + ATP = L-threonyl-tRNA(Thr) + AMP + diphosphate + H(+). Catalyzes the attachment of threonine to tRNA(Thr) in a two-step reaction: L-threonine is first activated by ATP to form Thr-AMP and then transferred to the acceptor end of tRNA(Thr). Also edits incorrectly charged L-seryl-tRNA(Thr). This is Threonine--tRNA ligase from Haemophilus influenzae (strain ATCC 51907 / DSM 11121 / KW20 / Rd).